We begin with the raw amino-acid sequence, 432 residues long: Testis-specific Y-encoded-like protein 1 (432 aa).

Disordered stretches follow at residues 1-31 (MSGRDGGERTPLLEAHSLTTSDCAAGAPDPS), 54-110 (ALPP…LETA), and 116-135 (TDDSLGNGCQPGEPQGLSRE). Lys-160 participates in a covalent cross-link: Glycyl lysine isopeptide (Lys-Gly) (interchain with G-Cter in SUMO2).

This sequence belongs to the nucleosome assembly protein (NAP) family. In terms of processing, ubiquitinated by the CRL2(APPBP2) complex, which recognizes the Arg-Xaa-Xaa-Gly sequence at the C-terminus, leading to its degradation.

The protein localises to the nucleus. It is found in the nucleolus. The chain is Testis-specific Y-encoded-like protein 1 (TSPYL1) from Bos taurus (Bovine).